We begin with the raw amino-acid sequence, 68 residues long: MIFPIRCFSCGAVISEVYEEYRTRLKNGENPEEILNDLEVKKYCCRRMFASHRLDNDRELFDDIVEYK.

4 residues coordinate Zn(2+): Cys-7, Cys-10, Cys-44, and Cys-45.

The protein belongs to the archaeal Rpo10/eukaryotic RPB10 RNA polymerase subunit family. Part of the RNA polymerase complex. Zn(2+) is required as a cofactor.

Its subcellular location is the cytoplasm. The enzyme catalyses RNA(n) + a ribonucleoside 5'-triphosphate = RNA(n+1) + diphosphate. In terms of biological role, DNA-dependent RNA polymerase (RNAP) catalyzes the transcription of DNA into RNA using the four ribonucleoside triphosphates as substrates. The polypeptide is DNA-directed RNA polymerase subunit Rpo10 (Methanococcus maripaludis (strain C5 / ATCC BAA-1333)).